The chain runs to 127 residues: Small ribosomal subunit protein uS13 (127 aa).

Belongs to the universal ribosomal protein uS13 family. In terms of assembly, part of the 30S ribosomal subunit. Forms a loose heterodimer with protein S19. Forms two bridges to the 50S subunit in the 70S ribosome.

Functionally, located at the top of the head of the 30S subunit, it contacts several helices of the 16S rRNA. In the 70S ribosome it contacts the 23S rRNA (bridge B1a) and protein L5 of the 50S subunit (bridge B1b), connecting the 2 subunits; these bridges are implicated in subunit movement. Contacts the tRNAs in the A and P-sites. The polypeptide is Small ribosomal subunit protein uS13 (Roseiflexus sp. (strain RS-1)).